The chain runs to 334 residues: GTP 3',8-cyclase (334 aa).

One can recognise a Radical SAM core domain in the interval R13 to A239. Position 22 (R22) interacts with GTP. Positions 29 and 33 each coordinate [4Fe-4S] cluster. Y35 serves as a coordination point for S-adenosyl-L-methionine. Residue C36 coordinates [4Fe-4S] cluster. Residue R73 participates in GTP binding. G77 provides a ligand contact to S-adenosyl-L-methionine. T104 contributes to the GTP binding site. S128 provides a ligand contact to S-adenosyl-L-methionine. K165 provides a ligand contact to GTP. S-adenosyl-L-methionine is bound at residue M199. [4Fe-4S] cluster-binding residues include C262 and C265. R267–R269 contributes to the GTP binding site. C279 is a binding site for [4Fe-4S] cluster.

It belongs to the radical SAM superfamily. MoaA family. In terms of assembly, monomer and homodimer. It depends on [4Fe-4S] cluster as a cofactor.

The catalysed reaction is GTP + AH2 + S-adenosyl-L-methionine = (8S)-3',8-cyclo-7,8-dihydroguanosine 5'-triphosphate + 5'-deoxyadenosine + L-methionine + A + H(+). The protein operates within cofactor biosynthesis; molybdopterin biosynthesis. In terms of biological role, catalyzes the cyclization of GTP to (8S)-3',8-cyclo-7,8-dihydroguanosine 5'-triphosphate. This chain is GTP 3',8-cyclase, found in Vibrio vulnificus (strain CMCP6).